A 310-amino-acid chain; its full sequence is Methionyl-tRNA formyltransferase (310 aa).

109–112 (SLLP) contacts (6S)-5,6,7,8-tetrahydrofolate.

Belongs to the Fmt family.

It catalyses the reaction L-methionyl-tRNA(fMet) + (6R)-10-formyltetrahydrofolate = N-formyl-L-methionyl-tRNA(fMet) + (6S)-5,6,7,8-tetrahydrofolate + H(+). Functionally, attaches a formyl group to the free amino group of methionyl-tRNA(fMet). The formyl group appears to play a dual role in the initiator identity of N-formylmethionyl-tRNA by promoting its recognition by IF2 and preventing the misappropriation of this tRNA by the elongation apparatus. The chain is Methionyl-tRNA formyltransferase from Pseudomonas entomophila (strain L48).